A 557-amino-acid polypeptide reads, in one-letter code: Urocanate hydratase (557 aa).

Residues 1–20 are disordered; it reads MSNPRHNEREVRSPRGDELN. Residues 52–53, Gln130, 176–178, Glu196, Arg201, 242–243, 263–267, 273–274, and Tyr322 each bind NAD(+); these read GG, GMG, NA, QTSAH, and YL. Cys410 is a catalytic residue. Gly492 is an NAD(+) binding site.

Belongs to the urocanase family. It depends on NAD(+) as a cofactor.

It is found in the cytoplasm. The catalysed reaction is 4-imidazolone-5-propanoate = trans-urocanate + H2O. It functions in the pathway amino-acid degradation; L-histidine degradation into L-glutamate; N-formimidoyl-L-glutamate from L-histidine: step 2/3. In terms of biological role, catalyzes the conversion of urocanate to 4-imidazolone-5-propionate. This Brucella anthropi (strain ATCC 49188 / DSM 6882 / CCUG 24695 / JCM 21032 / LMG 3331 / NBRC 15819 / NCTC 12168 / Alc 37) (Ochrobactrum anthropi) protein is Urocanate hydratase.